The sequence spans 534 residues: Beta-glucosidase 32 (534 aa).

Positions 1-22 are cleaved as a signal peptide; the sequence is MAIKLIALVITICVASWDSAQG. Q51 is an a beta-D-glucoside binding site. The N-linked (GlcNAc...) asparagine glycan is linked to N68. Residues H154 and 199–200 each bind a beta-D-glucoside; that span reads NE. The Proton donor role is filled by E200. A disulfide bridge links C219 with C227. Y344 is an a beta-D-glucoside binding site. An N-linked (GlcNAc...) asparagine glycan is attached at N374. An a beta-D-glucoside-binding site is contributed by E417. The active-site Nucleophile is E417. N425 carries N-linked (GlcNAc...) asparagine glycosylation. A beta-D-glucoside contacts are provided by residues W467, 474–475, and F483; that span reads EW.

Belongs to the glycosyl hydrolase 1 family.

It carries out the reaction Hydrolysis of terminal, non-reducing beta-D-glucosyl residues with release of beta-D-glucose.. This chain is Beta-glucosidase 32, found in Arabidopsis thaliana (Mouse-ear cress).